Reading from the N-terminus, the 522-residue chain is F-box/LRR-repeat protein 16 (522 aa).

In terms of domain architecture, F-box spans 38-84 (YDFTANLPDDCLAHIFQFLSAGDRKRCSLVSKRWLLVDGQNRHRLSL). LRR repeat units follow at residues 115–140 (SFSLSDEALFIVSIRCSNLIRVKLRG), 141–166 (CREITDLGMESFARNCKSLRKLSCGS), 169–191 (FGAKGINAMLEHCKVLEELSLKR), 266–290 (RLQVTDIGLFGISKCSNLETLHIVK), 291–316 (TPDCSNLGLASVVERCKLLRKLHIDG), 319–344 (VKRIGDQGLMSVAKHCLNLQELVLIG), 348–369 (TYMSLSAIASNCKKLERLALCG), 370–393 (SGTIGDAEIGCIAEKCVTLRKFCI), 395–420 (GCLISDVGVQALALGCPKLVKLKVKK), and 421–447 (CSLVTGEVREWLRERRMTLVVSMDDDE).

The protein is F-box/LRR-repeat protein 16 (FBL16) of Arabidopsis thaliana (Mouse-ear cress).